The sequence spans 308 residues: Oxygen-dependent coproporphyrinogen-III oxidase (308 aa).

Serine 100 is a substrate binding site. Positions 104 and 114 each coordinate a divalent metal cation. Histidine 114 serves as the catalytic Proton donor. Residue 116–118 (NFR) participates in substrate binding. Histidine 153 and histidine 183 together coordinate a divalent metal cation. Residues 248–283 (YVEFNLVFDRGTIFGLQSGGRTESILSSMPPMATWK) form an important for dimerization region. 266-268 (GGR) serves as a coordination point for substrate.

The protein belongs to the aerobic coproporphyrinogen-III oxidase family. As to quaternary structure, homodimer. It depends on a divalent metal cation as a cofactor.

The protein resides in the cytoplasm. The enzyme catalyses coproporphyrinogen III + O2 + 2 H(+) = protoporphyrinogen IX + 2 CO2 + 2 H2O. It functions in the pathway porphyrin-containing compound metabolism; protoporphyrin-IX biosynthesis; protoporphyrinogen-IX from coproporphyrinogen-III (O2 route): step 1/1. Its function is as follows. Involved in the heme biosynthesis. Catalyzes the aerobic oxidative decarboxylation of propionate groups of rings A and B of coproporphyrinogen-III to yield the vinyl groups in protoporphyrinogen-IX. The protein is Oxygen-dependent coproporphyrinogen-III oxidase of Francisella tularensis subsp. holarctica (strain FTNF002-00 / FTA).